The chain runs to 297 residues: Signal-transducing adaptor protein 1 (297 aa).

One can recognise a PH domain in the interval 25–121; that stretch reads PLYFEGFLLV…WRGFILTVTE (97 aa). The residue at position 170 (Tyr-170) is a Phosphotyrosine. The region spanning 179 to 273 is the SH2 domain; sequence ECFYAVSRKE…GNLRPFIHSA (95 aa). The tract at residues 271 to 297 is disordered; that stretch reads HSADDNFGQDPNIEDRSEKFKKNPHNA.

In terms of assembly, interacts with URI1; the interaction is phosphorylation-dependent occurs in a growth-dependent manner. Interacts with KIT and CSF1R. Post-translationally, phosphorylated on tyrosine by TEC. Phosphorylated on tyrosine by KIT. Expression restricted to the bone marrow.

The protein localises to the nucleus. Its subcellular location is the cytoplasm. It is found in the mitochondrion. In terms of biological role, may function as an adapter molecule downstream of KIT in the proliferation or differentiation of hematopoietic stem cells. This chain is Signal-transducing adaptor protein 1 (Stap1), found in Mus musculus (Mouse).